The following is a 710-amino-acid chain: Amyloid beta precursor protein binding family B member 1 (710 aa).

Positions 1–15 (MSVPSSLSQSAINAN) are enriched in polar residues. Disordered regions lie at residues 1-24 (MSVP…ALSL), 131-254 (GLRG…TDSD), 276-299 (GTTQ…EESQ), and 340-365 (TFPA…NTNP). Acidic residues predominate over residues 145–173 (GPDEGEEKAAGEAEEEEEDDDDEEEEEDL). At Lys-204 the chain carries N6-acetyllysine. The segment covering 223–234 (SWATLSQGSPSY) has biased composition (polar residues). Residues 253-285 (SDLPAGWMRVQDTSGTYYWHIPTGTTQWEPPGR) form the WW domain. Low complexity predominate over residues 287 to 299 (SPSQGSSPQEESQ). Residues 370 to 509 (FAVRSLGWVE…SKIMAERRNA (140 aa)) enclose the PID 1 domain. Ser-459 is modified (phosphoserine; by PKC). Residue Ser-517 is modified to Phosphoserine. The region spanning 542-699 (KFQVYYLGNV…RRGVQSLWGS (158 aa)) is the PID 2 domain. Phosphotyrosine; by ABL1 is present on Tyr-547. The residue at position 610 (Ser-610) is a Phosphoserine; by SGK1. N6-acetyllysine is present on Lys-701.

In terms of assembly, component of a complex, at least composed of APBB1, RASD1/DEXRAS1 and APP. Interacts (via PID domain 2) with APP (with the intracellular domain of the amyloid-beta precursor protein). Interacts (via PID domain 2) with RASD1/DEXRAS1; impairs the transcription activation activity. Interacts (via PID domain 1) with KAT5/TIP60. Interacts (via the WW domain) with the proline-rich region of APBB1IP. Interacts with TSHZ1 and TSHZ2. Interacts (via the WW domain) with histone H2AX (when phosphorylated on 'Tyr-142') and the proline-rich region of ENAH. Interacts with MAPK8. Interacts (via PID domain 1) with TSHZ3 (via homeobox domain). Interacts with SET. Found in a trimeric complex with HDAC1 and TSHZ3; the interaction between HDAC1 and APBB1 is mediated by TSHZ3. Interacts (via WWW domain) with NEK6. Interacts (via WWW domain) with ABL1. Interacts with RNF157. Interacts with ARF6. In terms of processing, phosphorylation at Ser-610 by SGK1 promotes its localization to the nucleus. Phosphorylated following nuclear translocation. Phosphorylation at Tyr-547 by ABL1 enhances transcriptional activation activity and reduces the affinity for RASD1/DEXRAS1. Phosphorylated at Ser-459 by PKC upon insulin activation. Acetylation at Lys-204 and Lys-701 by KAT5 promotes its transcription activator activity. Post-translationally, polyubiquitination by RNF157 leads to degradation by the proteasome. Highly expressed in brain; strongly reduced in post-mortem elderly subjects with Alzheimer disease. In terms of tissue distribution, expressed preferentially in the brain.

The protein resides in the cell membrane. It localises to the cytoplasm. Its subcellular location is the nucleus. It is found in the cell projection. The protein localises to the growth cone. The protein resides in the nucleus speckle. In terms of biological role, transcription coregulator that can have both coactivator and corepressor functions. Adapter protein that forms a transcriptionally active complex with the gamma-secretase-derived amyloid precursor protein (APP) intracellular domain. Plays a central role in the response to DNA damage by translocating to the nucleus and inducing apoptosis. May act by specifically recognizing and binding histone H2AX phosphorylated on 'Tyr-142' (H2AXY142ph) at double-strand breaks (DSBs), recruiting other pro-apoptosis factors such as MAPK8/JNK1. Required for histone H4 acetylation at double-strand breaks (DSBs). Its ability to specifically bind modified histones and chromatin modifying enzymes such as KAT5/TIP60, probably explains its transcription activation activity. Functions in association with TSHZ3, SET and HDAC factors as a transcriptional repressor, that inhibits the expression of CASP4. Associates with chromatin in a region surrounding the CASP4 transcriptional start site(s). Involved in hippocampal neurite branching and neuromuscular junction formation, as a result plays a role in spatial memory functioning. Plays a role in the maintenance of lens transparency. May play a role in muscle cell strength. Acts as a molecular adapter that functions in neurite outgrowth by activating the RAC1-ARF6 axis upon insulin treatment. In Homo sapiens (Human), this protein is Amyloid beta precursor protein binding family B member 1.